The chain runs to 176 residues: Nascent polypeptide-associated complex subunit alpha (176 aa).

The region spanning 14–78 (SKNEKKAREL…AKVDDFTQRL (65 aa)) is the NAC-A/B domain. The disordered stretch occupies residues 85 to 127 (LQQNEGVLPAGQDAVSKDPQSIQADMQAAADSATDKPSADDAV). In terms of domain architecture, UBA spans 137 to 176 (LNADDIELVMQQAGVPRAKAAKALKEHDSDIVNAIMALSG).

It belongs to the NAC-alpha family. Part of the nascent polypeptide-associated complex (NAC), consisting of EGD2 and EGD1. NAC associates with ribosomes via EGD1.

It localises to the cytoplasm. Its subcellular location is the nucleus. Its function is as follows. Component of the nascent polypeptide-associated complex (NAC), a dynamic component of the ribosomal exit tunnel, protecting the emerging polypeptides from interaction with other cytoplasmic proteins to ensure appropriate nascent protein targeting. The NAC complex also promotes mitochondrial protein import by enhancing productive ribosome interactions with the outer mitochondrial membrane and blocks the inappropriate interaction of ribosomes translating non-secretory nascent polypeptides with translocation sites in the membrane of the endoplasmic reticulum. EGD2 may also be involved in transcription regulation. In Kluyveromyces lactis (strain ATCC 8585 / CBS 2359 / DSM 70799 / NBRC 1267 / NRRL Y-1140 / WM37) (Yeast), this protein is Nascent polypeptide-associated complex subunit alpha (EGD2).